Here is a 358-residue protein sequence, read N- to C-terminus: Methylthioribose-1-phosphate isomerase (358 aa).

Substrate is bound by residues 54–56, arginine 96, and glutamine 205; that span reads RGA. The Proton donor role is filled by aspartate 246. Residue 256–257 coordinates substrate; it reads NK.

The protein belongs to the eIF-2B alpha/beta/delta subunits family. MtnA subfamily.

It carries out the reaction 5-(methylsulfanyl)-alpha-D-ribose 1-phosphate = 5-(methylsulfanyl)-D-ribulose 1-phosphate. The protein operates within amino-acid biosynthesis; L-methionine biosynthesis via salvage pathway; L-methionine from S-methyl-5-thio-alpha-D-ribose 1-phosphate: step 1/6. Catalyzes the interconversion of methylthioribose-1-phosphate (MTR-1-P) into methylthioribulose-1-phosphate (MTRu-1-P). This Azotobacter vinelandii (strain DJ / ATCC BAA-1303) protein is Methylthioribose-1-phosphate isomerase.